The sequence spans 651 residues: L-type lectin-domain containing receptor kinase IX.1 (651 aa).

Positions 1 to 19 (MANSILLFSFVLVLPFVCS) are cleaved as a signal peptide. A legume-lectin like region spans residues 20 to 251 (VQFNISRFGS…GNRLLSWEFS (232 aa)). Residues 20–269 (VQFNISRFGS…KKSQNDKKGM (250 aa)) lie on the Extracellular side of the membrane. N-linked (GlcNAc...) asparagine glycans are attached at residues Asn-23, Asn-125, Asn-129, Asn-162, Asn-169, Asn-174, Asn-195, and Asn-211. Residues 270 to 290 (IIGISVSGFVLLTFFITSLIV) form a helical membrane-spanning segment. At 291-651 (FLKRKQQKKK…VTFSSAQHGR (361 aa)) the chain is on the cytoplasmic side. Residues 335 to 616 (FADDRKLGEG…LNLEAPVPHL (282 aa)) enclose the Protein kinase domain. Residues 341–349 (LGEGGFGAV) and Lys-364 contribute to the ATP site. The active-site Proton acceptor is the Asp-459. A disordered region spans residues 630 to 651 (SNTTSVSSGGATVTFSSAQHGR).

In the C-terminal section; belongs to the protein kinase superfamily. Ser/Thr protein kinase family. The protein in the N-terminal section; belongs to the leguminous lectin family. As to quaternary structure, interacts with ABCG40.

The protein resides in the cell membrane. The enzyme catalyses L-seryl-[protein] + ATP = O-phospho-L-seryl-[protein] + ADP + H(+). It catalyses the reaction L-threonyl-[protein] + ATP = O-phospho-L-threonyl-[protein] + ADP + H(+). In terms of biological role, promotes hydrogen peroxide H(2)O(2) production and cell death. Involved in resistance response to the pathogenic oomycetes Phytophthora infestans and Phytophthora capsici. The protein is L-type lectin-domain containing receptor kinase IX.1 of Arabidopsis thaliana (Mouse-ear cress).